Reading from the N-terminus, the 507-residue chain is Ribosomal protein uS12 methylthiotransferase RimO (507 aa).

The MTTase N-terminal domain maps to 13-124; sequence RRVALLTLGC…ISDRLGAVLA (112 aa). The [4Fe-4S] cluster site is built by Cys22, Cys58, Cys87, Cys205, Cys209, and Cys212. A Radical SAM core domain is found at 191–422; the sequence is LDTGPVASLK…ALADELCAQR (232 aa). A TRAM domain is found at 424–497; it reads EQRLGSTVQV…GVDLVAVPDA (74 aa).

The protein belongs to the methylthiotransferase family. RimO subfamily. [4Fe-4S] cluster serves as cofactor.

Its subcellular location is the cytoplasm. The catalysed reaction is L-aspartate(89)-[ribosomal protein uS12]-hydrogen + (sulfur carrier)-SH + AH2 + 2 S-adenosyl-L-methionine = 3-methylsulfanyl-L-aspartate(89)-[ribosomal protein uS12]-hydrogen + (sulfur carrier)-H + 5'-deoxyadenosine + L-methionine + A + S-adenosyl-L-homocysteine + 2 H(+). In terms of biological role, catalyzes the methylthiolation of an aspartic acid residue of ribosomal protein uS12. This is Ribosomal protein uS12 methylthiotransferase RimO from Salinispora tropica (strain ATCC BAA-916 / DSM 44818 / JCM 13857 / NBRC 105044 / CNB-440).